We begin with the raw amino-acid sequence, 249 residues long: Pleckstrin homology domain-containing family F member 2 (249 aa).

At serine 16 the chain carries Phosphoserine. Positions 35–131 (VLIGEGVLTK…WMNHINKCVT (97 aa)) constitute a PH domain. Residue lysine 44 is modified to N6-acetyllysine. The segment at 152-212 (DSEATVCMRC…ICDFCYDLLS (61 aa)) adopts an FYVE-type zinc-finger fold. Positions 158, 161, 175, 178, 183, 186, 204, and 207 each coordinate Zn(2+). Residues 221–233 (PARSDSYSQSLKS) show a composition bias toward polar residues. Residues 221 to 249 (PARSDSYSQSLKSPLNDMSDDDDDDDSSD) are disordered. The segment covering 238–249 (MSDDDDDDDSSD) has biased composition (acidic residues). A phosphoserine mark is found at serine 239 and serine 248.

As to quaternary structure, may interact with EEA1. In terms of tissue distribution, expressed in placenta, ovary and small intestine, as well as in heart and pancreas. Also expressed in peripheral blood mononuclear cells and dendritic cells.

The protein localises to the early endosome membrane. The protein resides in the endoplasmic reticulum. May play a role in early endosome fusion upstream of RAB5, hence regulating receptor trafficking and fluid-phase transport. Enhances cellular sensitivity to TNF-induced apoptosis. This is Pleckstrin homology domain-containing family F member 2 (PLEKHF2) from Homo sapiens (Human).